The primary structure comprises 108 residues: Small ribosomal subunit protein uS17 (108 aa).

It belongs to the universal ribosomal protein uS17 family. In terms of assembly, part of the 30S ribosomal subunit.

Functionally, one of the primary rRNA binding proteins, it binds specifically to the 5'-end of 16S ribosomal RNA. The protein is Small ribosomal subunit protein uS17 of Methanocorpusculum labreanum (strain ATCC 43576 / DSM 4855 / Z).